The sequence spans 349 residues: UDP-N-acetylenolpyruvoylglucosamine reductase (349 aa).

Residues 25 to 213 (VGPVARRLVT…VEQGERTDPQ (189 aa)) enclose the FAD-binding PCMH-type domain. Residue Arg165 is part of the active site. Ser242 functions as the Proton donor in the catalytic mechanism. The active site involves Glu341.

Belongs to the MurB family. The cofactor is FAD.

It is found in the cytoplasm. It carries out the reaction UDP-N-acetyl-alpha-D-muramate + NADP(+) = UDP-N-acetyl-3-O-(1-carboxyvinyl)-alpha-D-glucosamine + NADPH + H(+). It participates in cell wall biogenesis; peptidoglycan biosynthesis. Functionally, cell wall formation. The sequence is that of UDP-N-acetylenolpyruvoylglucosamine reductase from Mycolicibacterium gilvum (strain PYR-GCK) (Mycobacterium gilvum (strain PYR-GCK)).